Here is a 548-residue protein sequence, read N- to C-terminus: uncharacterized protein (548 aa).

One can recognise a DhaL domain in the interval 8–200 (KLFADMIIQG…LLCVYEGFLK (193 aa)).

This is an uncharacterized protein from Staphylococcus aureus (strain bovine RF122 / ET3-1).